A 191-amino-acid chain; its full sequence is Outer membrane lipoprotein DolP (191 aa).

A signal peptide spans 1-18 (MKALSPIAVLISALLLQG). A lipid anchor (N-palmitoyl cysteine) is attached at Cys19. Cys19 is lipidated: S-diacylglycerol cysteine. 2 BON domains span residues 46-115 (DDGT…RQGQ) and 124-191 (NDTW…TFIK).

The protein belongs to the lipoprotein DolP family.

The protein localises to the cell outer membrane. Plays an important role in maintaining outer membrane integrity. The polypeptide is Outer membrane lipoprotein DolP (Escherichia coli O157:H7).